A 396-amino-acid chain; its full sequence is Ribosomal RNA large subunit methyltransferase I (396 aa).

In terms of domain architecture, PUA spans 2–81 (TVRLILAKGR…EVIDCAFFIR (80 aa)).

This sequence belongs to the methyltransferase superfamily. RlmI family.

It is found in the cytoplasm. The enzyme catalyses cytidine(1962) in 23S rRNA + S-adenosyl-L-methionine = 5-methylcytidine(1962) in 23S rRNA + S-adenosyl-L-homocysteine + H(+). Specifically methylates the cytosine at position 1962 (m5C1962) of 23S rRNA. This is Ribosomal RNA large subunit methyltransferase I from Yersinia pestis bv. Antiqua (strain Antiqua).